The chain runs to 329 residues: Small ribosomal subunit protein RACK1 (329 aa).

WD repeat units lie at residues 19 to 59, 68 to 107, 110 to 149, 154 to 193, 196 to 235, 237 to 275, and 295 to 328; these read GHNG…ATSP, GHSH…STRL, GHTQ…KFTL, AHQD…CNHT, DHTG…PLYK, EARN…VLAE, and PKAP…KSSS.

Belongs to the WD repeat G protein beta family. Ribosomal protein RACK1 subfamily.

This Dictyostelium discoideum (Social amoeba) protein is Small ribosomal subunit protein RACK1 (gpbB).